The primary structure comprises 344 residues: Cyanuric acid amidohydrolase (344 aa).

Residues 1–91 (MTVVDIVKRT…ASAFVGTDRP (91 aa)) are RU A. Substrate-binding positions include R51 and 71-72 (SG). The interval 97–232 (ALVAAVGRTA…CHILVLGNSP (136 aa)) is RU B. K146 is an active-site residue. Residues R178 and 215 to 216 (SS) contribute to the substrate site. S215 (nucleophile) is an active-site residue. Residues 238 to 344 (LRAVHGVMRD…PVTVVYRVAS (107 aa)) form an RU C region. E276 is a binding site for Mg(2+). Residues R303 and 322–323 (SG) each bind substrate. The Mg(2+) site is built by A325, Q328, G329, P330, and G333.

Belongs to the cyclic amide hydrolase (CyAH) family. Homotetramer.

It carries out the reaction cyanurate + H2O = 1-carboxybiuret + H(+). The protein operates within xenobiotic degradation; atrazine degradation; biuret from cyanurate: step 1/1. Its activity is regulated as follows. Inhibited by barbituric acid. In terms of biological role, responsible for the hydrolysis of cyanuric acid, an intermediate formed during catabolism of s-triazine based compounds in herbicides such as atrazine and polymers such as melamine. Catalyzes the hydrolytic opening of the s-triazine ring of cyanuric acid (2,4,6-trihydroxy-s-triazine) to yield carbon dioxide and carboxybiuret, which spontaneously decarboxylates to biuret. The protein is Cyanuric acid amidohydrolase of Pseudonocardia dioxanivorans (strain ATCC 55486 / DSM 44775 / JCM 13855 / CB1190).